Reading from the N-terminus, the 350-residue chain is Cyclin-O (350 aa).

Positions 1–89 (MVTPCPTSPS…GSPLPGPAQP (89 aa)) are disordered. The segment covering 28-42 (PVKKSRRPRLRRKQP) has biased composition (basic residues). A Phosphoserine modification is found at Ser-81.

It belongs to the cyclin family. In terms of tissue distribution, present in respiratory cells (at protein level).

The protein localises to the cytoplasm. It is found in the nucleus. It localises to the nucleolus. Functionally, specifically required for generation of multiciliated cells, possibly by promoting a cell cycle state compatible with centriole amplification and maturation. Acts downstream of MCIDAS to promote mother centriole amplification and maturation in preparation for apical docking. The chain is Cyclin-O from Homo sapiens (Human).